The following is a 462-amino-acid chain: MPSPEHPSWLSTLLADTRPPPKLFAWSPANLDSPTAVKPDRADRGDFDPGKYPVDAPITTASEPVKRIYIVGPGNVGRLYASYMSRQRDALPITLVVHRKELLSQWVTSEGVVLADRGGKVTKNKQFDVEWWTESRPRYGPVREVADGEKLHNVFISTKADAGLGEADRLRRYLGRCSSVVFAQNGVSKLWAPYGPLYVASRYHADDAPSFSACVVNHGISAAGLFYSIHTSPSDAFIGPIFKGSAAPAHGQNKRRRLDDDFFTTYISSTPFLDTKHVSSGQLWIIQLEKLVLNAAINPLTTLLRCKTGQLFASYDSHDALTRVLDQLLWQASAVIQALINHDANIDMLTSYAETVHRLVPGSDDYGRNFANIRRKLTVRFSQPILKAKLYAFGLNIREHRSSMLQDAEAGRKTEIRDVNGWIVDMAEYLGLDLDVGIHRGLIELIEECVVLDKEELARRLL.

A disordered region spans residues 34–55; the sequence is PTAVKPDRADRGDFDPGKYPVD. Residues 38 to 49 are compositionally biased toward basic and acidic residues; sequence KPDRADRGDFDP. Residue 72-77 coordinates NADP(+); the sequence is GPGNVG. A Calmoduling-binding motif is present at residues 167 to 184; it reads ADRLRRYLGRCSSVVFAQ. The active-site Proton donor is Lys290. Substrate is bound by residues Asn294, Asn298, and Ser403. Glu415 is a binding site for NADP(+).

The protein belongs to the ketopantoate reductase family. Homodimer. Binds to calmodulin in a calcium-independent manner.

The enzyme catalyses (R)-2-hydroxy-3-methylbutanoate + NADP(+) = 3-methyl-2-oxobutanoate + NADPH + H(+). Environmental stimuli such as light and salt stress suppress activity through stimulation of calmodulin (CaM) that binds BEA2 and probably impairs its dimerization. Ketoisovalerate reductase; part of the gene cluster that mediates the biosynthesis of beauvericin (BEA), a non-ribosomal cyclic hexadepsipeptide that shows antibiotic, antifungal, insecticidal, and cancer cell antiproliferative and antihaptotactic activity. Ketoisovalerate reductase BEA2 catalyzes the NADPH-specific reduction of ketoisovaleric acid to hydroxyisovalerate, a precursor for beauvericin biosynthesis. The nonribosomal cyclodepsipeptide synthetase BEA1 then catalyzes the formation of beauvericin via condensation and cyclization of 3 dipeptidol monomers, each composed of one unit of hydroxyisovalerate and one unit of N-methyl-phenylalanine. The sequence is that of Ketoisovalerate reductase from Beauveria bassiana (White muscardine disease fungus).